The primary structure comprises 210 residues: Methylthioribulose-1-phosphate dehydratase (210 aa).

The Zn(2+) site is built by His94 and His96.

This sequence belongs to the aldolase class II family. MtnB subfamily. The cofactor is Zn(2+).

The enzyme catalyses 5-(methylsulfanyl)-D-ribulose 1-phosphate = 5-methylsulfanyl-2,3-dioxopentyl phosphate + H2O. The protein operates within amino-acid biosynthesis; L-methionine biosynthesis via salvage pathway; L-methionine from S-methyl-5-thio-alpha-D-ribose 1-phosphate: step 2/6. Its function is as follows. Catalyzes the dehydration of methylthioribulose-1-phosphate (MTRu-1-P) into 2,3-diketo-5-methylthiopentyl-1-phosphate (DK-MTP-1-P). This is Methylthioribulose-1-phosphate dehydratase from Yersinia enterocolitica serotype O:8 / biotype 1B (strain NCTC 13174 / 8081).